The primary structure comprises 110 residues: Iron-sulfur cluster assembly protein CyaY (110 aa).

Belongs to the frataxin family.

In terms of biological role, involved in iron-sulfur (Fe-S) cluster assembly. May act as a regulator of Fe-S biogenesis. This chain is Iron-sulfur cluster assembly protein CyaY, found in Pseudomonas syringae pv. syringae (strain B728a).